We begin with the raw amino-acid sequence, 98 residues long: DNA/RNA-binding protein Alba (98 aa).

Lys-16 carries the N6-acetyllysine modification.

The protein belongs to the histone-like Alba family. Post-translationally, acetylated. Acetylation at Lys-16 decreases DNA-binding affinity.

It is found in the cytoplasm. It localises to the chromosome. Binds double-stranded DNA tightly but without sequence specificity. Involved in DNA compaction. The sequence is that of DNA/RNA-binding protein Alba from Metallosphaera sedula (strain ATCC 51363 / DSM 5348 / JCM 9185 / NBRC 15509 / TH2).